Here is a 941-residue protein sequence, read N- to C-terminus: Bifunctional glutamine synthetase adenylyltransferase/adenylyl-removing enzyme (941 aa).

Residues 1 to 431 (MSSAPPFAAA…TFRNAFRLAG (431 aa)) form an adenylyl removase region. The interval 447 to 941 (NGHAMRPHAG…DGTIAQAEVK (495 aa)) is adenylyl transferase.

This sequence belongs to the GlnE family. Mg(2+) serves as cofactor.

It carries out the reaction [glutamine synthetase]-O(4)-(5'-adenylyl)-L-tyrosine + phosphate = [glutamine synthetase]-L-tyrosine + ADP. The catalysed reaction is [glutamine synthetase]-L-tyrosine + ATP = [glutamine synthetase]-O(4)-(5'-adenylyl)-L-tyrosine + diphosphate. Functionally, involved in the regulation of glutamine synthetase GlnA, a key enzyme in the process to assimilate ammonia. When cellular nitrogen levels are high, the C-terminal adenylyl transferase (AT) inactivates GlnA by covalent transfer of an adenylyl group from ATP to specific tyrosine residue of GlnA, thus reducing its activity. Conversely, when nitrogen levels are low, the N-terminal adenylyl removase (AR) activates GlnA by removing the adenylyl group by phosphorolysis, increasing its activity. The regulatory region of GlnE binds the signal transduction protein PII (GlnB) which indicates the nitrogen status of the cell. This Bordetella pertussis (strain Tohama I / ATCC BAA-589 / NCTC 13251) protein is Bifunctional glutamine synthetase adenylyltransferase/adenylyl-removing enzyme.